We begin with the raw amino-acid sequence, 527 residues long: Estrogen receptor beta (527 aa).

The interval 1–145 is modulating; the sequence is MDVKNSPSSL…SPSSKRDAHF (145 aa). Residues S84 and S102 each carry the phosphoserine; by MAPK modification. NR C4-type zinc fingers lie at residues 146–166 and 182–206; these read CAVC…CEGC and CPAT…LRKC. The nuclear receptor DNA-binding region spans 146 to 211; sequence CAVCSDYASG…RLRKCYEVGM (66 aa). The NR LBD domain maps to 261–495; that stretch reads SPEQLVLTLL…DLLLEMLNAH (235 aa). The disordered stretch occupies residues 505–527; that stretch reads TRSERNLAEDSESKEGSQKPQAQ. Basic and acidic residues predominate over residues 506-521; sequence RSERNLAEDSESKEGS.

This sequence belongs to the nuclear hormone receptor family. NR3 subfamily. As to quaternary structure, binds DNA as a homodimer. Can form a heterodimer with ESR1. Interacts with NCOA1, NCOA3, NCOA5 and NCOA6 coactivators, leading to a strong increase of transcription of target genes. Interacts with UBE1C and AKAP13. Interacts with DNTTIP2. Interacts with CCDC62 in the presence of estradiol/E2; this interaction seems to enhance the transcription of target genes. Interacts with DNAAF4. Interacts with PRMT2. Interacts with CCAR2 (via N-terminus) in a ligand-independent manner. Interacts with RBM39, in the presence of estradiol (E2). Interacts with STUB1/CHIP. Post-translationally, phosphorylation at Ser-84 and Ser-102 recruits NCOA1.

Its subcellular location is the nucleus. Nuclear hormone receptor. Binds estrogens with an affinity similar to that of ESR1/ER-alpha, and activates expression of reporter genes containing estrogen response elements (ERE) in an estrogen-dependent manner. The chain is Estrogen receptor beta (ESR2) from Ovis aries (Sheep).